An 871-amino-acid polypeptide reads, in one-letter code: Pre-mRNA-processing factor 40 homolog B (871 aa).

2 consecutive WW domains span residues Gly92 to Val125 and Leu133 to Asp166. At Lys148 the chain carries N6-acetyllysine. Residues Glu171–Glu277 form a disordered region. A Glycyl lysine isopeptide (Lys-Gly) (interchain with G-Cter in SUMO2) cross-link involves residue Lys175. Over residues Gln182–Gln191 the composition is skewed to low complexity. Residues Pro192 to Val211 are compositionally biased toward pro residues. Composition is skewed to low complexity over residues Pro212–Gly221 and Glu245–Pro255. FF domains are found at residues Arg276–Gln330, Arg340–Phe397, Arg410–Ala470, Gln490–Glu550, Arg554–Lys610, and Arg625–Val682. A disordered region spans residues His690–Gln871. Residues Leu691–His711 are compositionally biased toward basic residues. Residues Ser739 to Gly756 show a composition bias toward low complexity. Position 764 is a phosphoserine (Ser764). Basic residues predominate over residues Arg777–Ser793. Basic and acidic residues predominate over residues Glu803 to Gln824. Residue Ser832 is modified to Phosphoserine. Residue Lys838 forms a Glycyl lysine isopeptide (Lys-Gly) (interchain with G-Cter in SUMO2) linkage. The residue at position 852 (Ser852) is a Phosphoserine.

Belongs to the PRPF40 family. As to quaternary structure, interacts with the N-terminus of HD. As to expression, expressed in the striatum and cortex of the brain (at protein level). Highly expressed in testis, fetal kidney and fetal brain. Moderately expressed in pancreas, skeletal muscle, placenta, brain and heart. Weakly expressed in colon, ileum, ovary, prostate, spleen, kidney and fetal lung.

It is found in the nucleus speckle. Functionally, may be involved in pre-mRNA splicing. The sequence is that of Pre-mRNA-processing factor 40 homolog B (PRPF40B) from Homo sapiens (Human).